A 519-amino-acid polypeptide reads, in one-letter code: Ribonuclease Y (519 aa).

The chain crosses the membrane as a helical span at residues 3-23; sequence LLSLLLILLGIILGVVVGYIV. The region spanning 209-269 is the KH domain; the sequence is TVSVVNLPND…IRREIARTAL (61 aa). An HD domain is found at 335 to 428; it reads VLKHSIEVAH…VAAADALSAA (94 aa).

It belongs to the RNase Y family.

It is found in the cell membrane. Endoribonuclease that initiates mRNA decay. The polypeptide is Ribonuclease Y (Staphylococcus epidermidis (strain ATCC 35984 / DSM 28319 / BCRC 17069 / CCUG 31568 / BM 3577 / RP62A)).